The following is a 140-amino-acid chain: VapC ribonuclease Y4jK (140 aa).

Residues I2 to N135 form the PINc domain. Residues D5 and D104 each contribute to the Mg(2+) site.

This sequence belongs to the PINc/VapC protein family. Mg(2+) is required as a cofactor.

Functionally, toxic component of a type II toxin-antitoxin (TA) system. An RNase. Involved in plasmid stability. The chain is VapC ribonuclease Y4jK from Sinorhizobium fredii (strain NBRC 101917 / NGR234).